The primary structure comprises 445 residues: Trigger factor (445 aa).

A PPIase FKBP-type domain is found at 171–256; it reads NDIVIIDFKG…VHVVNEVETP (86 aa).

The protein belongs to the FKBP-type PPIase family. Tig subfamily.

It localises to the cytoplasm. The catalysed reaction is [protein]-peptidylproline (omega=180) = [protein]-peptidylproline (omega=0). Its function is as follows. Involved in protein export. Acts as a chaperone by maintaining the newly synthesized protein in an open conformation. Functions as a peptidyl-prolyl cis-trans isomerase. This Malacoplasma penetrans (strain HF-2) (Mycoplasma penetrans) protein is Trigger factor.